The chain runs to 296 residues: Ribonuclease HIII (296 aa).

In terms of domain architecture, RNase H type-2 spans 81-296 (QAMIGTDEVG…TQKAKQLLER (216 aa)). The a divalent metal cation site is built by Asp87, Glu88, and Asp190.

It belongs to the RNase HII family. RnhC subfamily. Mn(2+) is required as a cofactor. It depends on Mg(2+) as a cofactor.

Its subcellular location is the cytoplasm. It catalyses the reaction Endonucleolytic cleavage to 5'-phosphomonoester.. Functionally, endonuclease that specifically degrades the RNA of RNA-DNA hybrids. This chain is Ribonuclease HIII, found in Streptococcus gordonii (strain Challis / ATCC 35105 / BCRC 15272 / CH1 / DL1 / V288).